A 1029-amino-acid chain; its full sequence is MAYYSRPASAGAARAQDDQDPYPYYPDPDLIVGSGANTSFVNPYEASGAASSASHTSPFSDAHAASASPASILPLSHQQVSAHAPQQQHMSISVDPRDGQQSRMPGLSESFYSQAAYALASPPPAAGALSPSAHLATLPEHSQAPLSGSVDGEYTYYSQSAAGHYSSLAHRHGQDDEDDDDAETKYSPSSAHDEKYAYDRPDSAAAGTSPFGRAAGIAYLQSPYAQVARNDDDDEDEDAEDPYRVLTRDSAFGGDNGQGYDPNSAYGGAGMAGPTGQFGDNHFDTQHFGPAPARGAQLRRHKTKKNVRLTKGNLILDCPVPTKLQTFLTRRAEDEFTTMRYSAVTCDPDDFASESFTLRPALYGRHTELFIAITMYNEDEVLFCRTFHGVMKNIAHLCSRNKSRTWGKDGWKKVVVAIISDGRKKIHPRVLDCLAALGVYQDGVAKNMVDGKEVRAHLYEYTTQLSIDSNLQFKGAERGLVPMQIIFCLKEKNAKKINSHRWFFNAFCPILQPNVTILLDVGTRPENKSIYYLWKSFDLNSNVAGACGEICAETKGKWGVGPLLLNPLVAAQNFEYKISNILDKTTESVMGYISVLPGAFSAYRYIALQNDEFGHGPLASYFKGENLLGADADVFTSNMYLAEDRILCFELAAKRGHGWVLKYVKSARGVTDVPEGLPEFISQRRRWLNGSFFAAVYALYHTAQFVRSGHNVWRKSLLVFESFYSFVNMCFAWFGLANYYIFFRILTTSLEDPTFKLRGIGVFNVFMQYIYLGTVVSSFIFAMGNRPQGSKWKYWAAVVVFALLTVYMMVAAVLCLSKVVARVEHDAIYAQMVVSLLATYGVYLISSLLACDPLHLITSFLQYLLLAPTYINILNIYAFCNLHDFSWGTKGDTSISADLGAVVSTSKGTVEITLPTAQADIDTAYDDALNNLRTRPMIIRGDASNAEKEARQMDYYKNIRTNVVLAWALSNGVLAAFILNGDAAGTFSDTGGVTRTKVYMVLVLIFVAGMACIRFIGSTLYLTIRLING.

Positions 1–29 (MAYYSRPASAGAARAQDDQDPYPYYPDPD) are disordered. Residue Asn37 is glycosylated (N-linked (GlcNAc...) asparagine). The segment covering 46–71 (ASGAASSASHTSPFSDAHAASASPAS) has biased composition (low complexity). 2 disordered regions span residues 46-105 (ASGA…SRMP) and 168-209 (LAHR…AGTS). A compositionally biased stretch (polar residues) spans 76 to 91 (SHQQVSAHAPQQQHMS). Basic and acidic residues predominate over residues 191 to 202 (AHDEKYAYDRPD). Asn401, Asn514, Asn527, and Asn689 each carry an N-linked (GlcNAc...) asparagine glycan. Transmembrane regions (helical) follow at residues 723 to 743 (FYSF…YIFF), 760 to 780 (IGVF…SSFI), 796 to 816 (AAVV…VLCL), 830 to 850 (AQMV…SLLA), 860 to 880 (FLQY…YAFC), 963 to 983 (VVLA…NGDA), and 998 to 1018 (VYMV…FIGS).

The protein belongs to the chitin synthase family. Class I subfamily.

The protein resides in the cell membrane. It localises to the cytoplasmic vesicle membrane. It carries out the reaction [(1-&gt;4)-N-acetyl-beta-D-glucosaminyl](n) + UDP-N-acetyl-alpha-D-glucosamine = [(1-&gt;4)-N-acetyl-beta-D-glucosaminyl](n+1) + UDP + H(+). In terms of biological role, polymerizes chitin, a structural polymer of the cell wall and septum, by transferring the sugar moiety of UDP-GlcNAc to the non-reducing end of the growing chitin polymer. This chain is Chitin synthase 3, found in Mycosarcoma maydis (Corn smut fungus).